Here is a 225-residue protein sequence, read N- to C-terminus: Fibronectin type III domain-containing protein 10 (225 aa).

Positions 1–19 are cleaved as a signal peptide; the sequence is MRAPPLLLLLAACAPPSGA. At 20 to 181 the chain is on the extracellular side; it reads AVDPTPPGWE…FTAEPAAMQE (162 aa). A Fibronectin type-III domain is found at 72–167; the sequence is LASAGGSLRA…ELAAAPPELA (96 aa). Asn-86 and Asn-109 each carry an N-linked (GlcNAc...) asparagine glycan. The chain crosses the membrane as a helical span at residues 182–202; the sequence is IVVAMTAVGGSICVMLVVICL. The Cytoplasmic segment spans residues 203 to 225; that stretch reads LVAYITENLMHPTFRRPSLRRQP.

Its subcellular location is the membrane. The sequence is that of Fibronectin type III domain-containing protein 10 (Fndc10) from Rattus norvegicus (Rat).